Here is a 676-residue protein sequence, read N- to C-terminus: Envelope glycoprotein (676 aa).

Positions 1–32 (MEGLSLLQLPRDKFRKSSFFVWVIILFQKAFS) are cleaved as a signal peptide. The Extracellular portion of the chain corresponds to 33 to 650 (MPLGVVTNST…DDNWWTGWRQ (618 aa)). Asn-40 carries N-linked (GlcNAc...) asparagine; by host glycosylation. Cystine bridges form between Cys-53–Cys-609, Cys-108–Cys-135, Cys-121–Cys-147, Cys-511–Cys-556, and Cys-601–Cys-608. Positions 54–201 (KDHLASTDQL…TFLQSPPIRE (148 aa)) are receptor-binding. N-linked (GlcNAc...) asparagine; by host glycans are attached at residues Asn-204, Asn-208, Asn-238, Asn-257, Asn-268, Asn-296, and Asn-314. The segment at 305–485 (ELSFETLSLN…STSNGLITST (181 aa)) is mucin-like region. Positions 312 to 351 (SLNETEDDDATSSRTTKGRISDRATRKYSDLVPKDSPGMV) are disordered. Residues 330 to 344 (RISDRATRKYSDLVP) are compositionally biased toward basic and acidic residues. Asn-366 carries N-linked (GlcNAc...) asparagine; by host glycosylation. The interval 406 to 458 (SSSQILSSSPTMAPSPETQTSTTYTPKLPVMTTEEPTTPPRNSPGSTTEAPTL) is disordered. Polar residues-rich tracts occupy residues 415–430 (PTMA…TTYT) and 448–458 (SPGSTTEAPTL). N-linked (GlcNAc...) asparagine; by host glycosylation is present at Asn-463. The tract at residues 524–539 (HNAAGIAWIPYFGPGA) is fusion peptide. Positions 554 to 595 (LVCGLRQLANETTQALQLFLRATTELRTYTILNRKAIDFLLR) form a coiled coil. N-linked (GlcNAc...) asparagine; by host glycosylation occurs at Asn-563. Residues 615–634 (WTKNITDKINQIIHDFIDNP) are a coiled coil. A glycan (N-linked (GlcNAc...) asparagine; by host) is linked at Asn-618. Residues 651–671 (WIPAGIGITGIIIAIIALLCV) form a helical membrane-spanning segment. 2 S-palmitoyl cysteine; by host lipidation sites follow: Cys-670 and Cys-672. Over 672–676 (CKLLC) the chain is Cytoplasmic.

The protein belongs to the filoviruses glycoprotein family. Homotrimer; each monomer consists of a GP1 and a GP2 subunit linked by disulfide bonds. The resulting peplomers (GP1,2) protrude from the virus surface as spikes. Interacts with host integrin alpha-V/ITGAV. Interacts with host CLEC10A. Binds also to host CD209 and CLEC4M/DC-SIGN(R). Interacts with host FOLR1. Interacts with BST2; this interaction inhibits the antiviral effect of BST2 and this allows viral release from infected cells. Interacts with host FCN1; this interaction enhances viral entry. Interacts with host TLR4; this interaction induces cell death in T-lymphocytes or proinflammatory cytokines and SOCS1 production in monocytes. In terms of assembly, interacts with host entry receptor NPC1. As to quaternary structure, GP1 and GP2delta are part of GP1,2delta soluble complexes released by ectodomain shedding. In terms of processing, the signal peptide region modulates GP's high mannose glycosylation, thereby determining the efficiency of the interactions with DC-SIGN(R). Post-translationally, N-glycosylated. O-glycosylated in the mucin-like region. In terms of processing, palmitoylation of GP2 is not required for its function. Post-translationally, specific enzymatic cleavages in vivo yield mature proteins. The precursor is processed into GP1 and GP2 by host cell furin in the trans Golgi, and maybe by other host proteases, to yield the mature GP1 and GP2 proteins. The cleavage site corresponds to the furin optimal cleavage sequence [KR]-X-[KR]-R. This cleavage does not seem to be required for function. After the internalization of the virus into cell endosomes, GP1 C-terminus is removed by the endosomal proteases cathepsin B, cathepsin L, or both, leaving a 19-kDa N-terminal fragment which is further digested by cathepsin B. Proteolytic processing of GP1,2 by host ADAM17 can remove the transmembrane anchor of GP2 and leads to shedding of complexes consisting in GP1 and truncated GP2 (GP1,2delta).

The protein resides in the virion membrane. Its subcellular location is the host cell membrane. It is found in the secreted. In terms of biological role, trimeric GP1,2 complexes form the virion surface spikes and mediate the viral entry processes, with GP1 acting as the receptor-binding subunit and GP2 as the membrane fusion subunit. At later times of infection, down-regulates the expression of various host cell surface molecules that are essential for immune surveillance and cell adhesion. Down-modulates several integrins including ITGA1, ITGA2, ITGA3, ITGA4, ITGA5, ITGA6, ITGAV and ITGB1. This decrease in cell adhesion molecules may lead to cell detachment, contributing to the disruption of blood vessel integrity and hemorrhages developed during infection (cytotoxicity). Interacts with host TLR4 and thereby stimulates the differentiation and activation of monocytes leading to bystander death of T-lymphocytes. Down-regulates as well the function of host natural killer cells. Counteracts the antiviral effect of host BST2/tetherin that restricts release of progeny virions from infected cells. However, cooperates with VP40 and host BST2 to activate canonical NF-kappa-B pathway in a manner dependent on neddylation. Its function is as follows. Functions as a decoy for anti-GP1,2 antibodies thereby contributing to viral immune evasion. Interacts and activates host macrophages and dendritic cells inducing up-regulation of cytokine transcription. This effect is mediated throught activation of host TLR4. Responsible for binding to the receptor(s) on target cells. Interacts with CD209/DC-SIGN and CLEC4M/DC-SIGNR which act as cofactors for virus entry into dendritic cells (DCs) and endothelial cells. Binding to the macrophage specific lectin CLEC10A also seems to enhance virus infectivity. Interaction with FOLR1/folate receptor alpha may be a cofactor for virus entry in some cell types, although results are contradictory. Members of the Tyro3 receptor tyrosine kinase family also seem to be cell entry factors in filovirus infection. Once attached, the virions are internalized through clathrin-dependent endocytosis and/or macropinocytosis. After internalization of the virus into the endosomes of the host cell, proteolysis of GP1 by two cysteine proteases, CTSB/cathepsin B and CTSL/cathepsin L removes the glycan cap and allows GP1 binding to the host entry receptor NPC1. NPC1-binding, Ca(2+) and acidic pH induce a conformational change of GP2, which unmasks its fusion peptide and permit membranes fusion. Functionally, acts as a class I viral fusion protein. Under the current model, the protein has at least 3 conformational states: pre-fusion native state, pre-hairpin intermediate state, and post-fusion hairpin state. During viral and target cell membrane fusion, the coiled coil regions (heptad repeats) assume a trimer-of-hairpins structure, positioning the fusion peptide in close proximity to the C-terminal region of the ectodomain. The formation of this structure appears to drive apposition and subsequent fusion of viral and target cell membranes. Responsible for penetration of the virus into the cell cytoplasm by mediating the fusion of the membrane of the endocytosed virus particle with the endosomal membrane. Low pH in endosomes induces an irreversible conformational change in GP2, releasing the fusion hydrophobic peptide. The polypeptide is Envelope glycoprotein (GP) (Sudan ebolavirus (strain Maleo-79) (SEBOV)).